A 376-amino-acid chain; its full sequence is Alcohol dehydrogenase class-3 (376 aa).

Positions 40, 62, 92, 95, 98, 106, and 170 each coordinate Zn(2+).

Belongs to the zinc-containing alcohol dehydrogenase family. Class-III subfamily. In terms of assembly, homodimer. Zn(2+) is required as a cofactor.

The protein resides in the cytoplasm. The catalysed reaction is a primary alcohol + NAD(+) = an aldehyde + NADH + H(+). The enzyme catalyses a secondary alcohol + NAD(+) = a ketone + NADH + H(+). It catalyses the reaction S-(hydroxymethyl)glutathione + NADP(+) = S-formylglutathione + NADPH + H(+). It carries out the reaction S-(hydroxymethyl)glutathione + NAD(+) = S-formylglutathione + NADH + H(+). Oxidizes long-chain aliphatic alcohols, long-chain hydroxylated fatty acids and S-hydroxymethylglutathione (hmGSH) in increasing order of preference. Shows little or no activity with short-chain aliphatic alcohols. This chain is Alcohol dehydrogenase class-3 (adhI), found in Cereibacter sphaeroides (strain ATCC 17023 / DSM 158 / JCM 6121 / CCUG 31486 / LMG 2827 / NBRC 12203 / NCIMB 8253 / ATH 2.4.1.) (Rhodobacter sphaeroides).